An 873-amino-acid polypeptide reads, in one-letter code: F-BAR domain only protein 1 (873 aa).

An F-BAR domain is found at 1 to 248 (MSYFGEHFWG…NVENVTVDML (248 aa)). A mediates membrane-binding region spans residues 1–275 (MSYFGEHFWG…LDFDAYSSAA (275 aa)). The tract at residues 153-172 (RENTSQKEMDKAETKSKKAA) is disordered. Residues 155–178 (NTSQKEMDKAETKSKKAADSLRRS) are a coiled coil. Positions 267-439 (DFDAYSSAAL…KSLFGPPLES (173 aa)) are mediates interaction with the adaptor protein complex AP-2. Phosphoserine is present on residues Ser295, Ser343, and Ser368. The interval 302–347 (SVDFLESDSGVPPEVDDEGFTVRPDISQNNGAEPPRFSSSDSDFDD) is disordered. Disordered regions lie at residues 381–600 (GSLI…RGPS) and 813–833 (SGHL…SPVA). Residues 447-466 (TGSSSLGFTSSPSPFSSSSP) show a composition bias toward low complexity. Ser518 is modified (phosphoserine). Positions 567 to 576 (SLSPSPLGSS) are enriched in low complexity. The tract at residues 593–873 (HGISRGPSPV…FATGMYLVSC (281 aa)) is mediates interaction with AGFG1, CALM, DAB2, EPS15, EPS15R, ITSN1 and clathrin. Ser600 is modified (phosphoserine). One can recognise an MHD domain in the interval 609–872 (ALPVATAFTE…RFATGMYLVS (264 aa)). The segment covering 816 to 827 (LSASWQPQSGPS) has biased composition (polar residues).

This sequence belongs to the FCHO family. In terms of assembly, may oligomerize and form homotetramer. Interacts with AP2A2 and AP2B1; 2 subunits of the adaptor protein complex AP-2. Interacts with DAB2. Interacts with clathrin (CLTC or CLTCL1). Interacts with EPS15, EPS15R and ITSN1. Interacts with AGFG1 and CALM. May interact with ACVR1; linking this receptor to clathrin-mediated endocytosis. As to expression, mainly detected in brain and spleen.

The protein localises to the membrane. The protein resides in the clathrin-coated pit. Functionally, functions in an early step of clathrin-mediated endocytosis. Has both a membrane binding/bending activity and the ability to recruit proteins essential to the formation of functional clathrin-coated pits. May regulate Bmp signaling by regulating clathrin-mediated endocytosis of Bmp receptors. Involved in the regulation of T-cell poliferation and activation. Affects TCR clustering upon receptor triggering and modulates its internalisation, playing a role in TCR-dependent T-cell activation. The chain is F-BAR domain only protein 1 from Mus musculus (Mouse).